The chain runs to 188 residues: Ribosome maturation factor RimM (188 aa).

In terms of domain architecture, PRC barrel spans 98–174; that stretch reads EGTFYYHDLR…HLTADAPAGL (77 aa). Residues 169-188 are disordered; the sequence is DAPAGLIGPEPGEEDGAAES. Acidic residues predominate over residues 179-188; that stretch reads PGEEDGAAES.

Belongs to the RimM family. As to quaternary structure, binds ribosomal protein uS19.

It localises to the cytoplasm. In terms of biological role, an accessory protein needed during the final step in the assembly of 30S ribosomal subunit, possibly for assembly of the head region. Essential for efficient processing of 16S rRNA. May be needed both before and after RbfA during the maturation of 16S rRNA. It has affinity for free ribosomal 30S subunits but not for 70S ribosomes. This is Ribosome maturation factor RimM from Deinococcus radiodurans (strain ATCC 13939 / DSM 20539 / JCM 16871 / CCUG 27074 / LMG 4051 / NBRC 15346 / NCIMB 9279 / VKM B-1422 / R1).